A 515-amino-acid polypeptide reads, in one-letter code: RNA-splicing ligase RtcB homolog (515 aa).

Residues aspartate 121, cysteine 124, histidine 229, histidine 269, and histidine 363 each contribute to the Mn(2+) site. 228-232 provides a ligand contact to GMP; the sequence is NHYGE. GMP is bound by residues 363–364, 412–415, serine 419, 438–441, and lysine 514; these read HN, GGTM, and HGSG. Residue histidine 438 is the GMP-histidine intermediate of the active site.

This sequence belongs to the RtcB family. In terms of assembly, catalytic component of the tRNA-splicing ligase complex. The cofactor is Mn(2+).

It catalyses the reaction a 3'-end 3'-phospho-ribonucleotide-RNA + a 5'-end dephospho-ribonucleoside-RNA + GTP = a ribonucleotidyl-ribonucleotide-RNA + GMP + diphosphate. The enzyme catalyses a 3'-end 2',3'-cyclophospho-ribonucleotide-RNA + a 5'-end dephospho-ribonucleoside-RNA + GTP + H2O = a ribonucleotidyl-ribonucleotide-RNA + GMP + diphosphate + H(+). In terms of biological role, catalytic subunit of the tRNA-splicing ligase complex that acts by directly joining spliced tRNA halves to mature-sized tRNAs by incorporating the precursor-derived splice junction phosphate into the mature tRNA as a canonical 3',5'-phosphodiester. May act as an RNA ligase with broad substrate specificity, and may function toward other RNAs. This chain is RNA-splicing ligase RtcB homolog, found in Theileria annulata.